We begin with the raw amino-acid sequence, 217 residues long: FMN-dependent NADH:quinone oxidoreductase (217 aa).

Residues Ser-10, Ser-17–Ser-19, and Ser-137–Gly-140 each bind FMN.

The protein belongs to the azoreductase type 1 family. Homodimer. FMN serves as cofactor.

It carries out the reaction 2 a quinone + NADH + H(+) = 2 a 1,4-benzosemiquinone + NAD(+). It catalyses the reaction N,N-dimethyl-1,4-phenylenediamine + anthranilate + 2 NAD(+) = 2-(4-dimethylaminophenyl)diazenylbenzoate + 2 NADH + 2 H(+). In terms of biological role, quinone reductase that provides resistance to thiol-specific stress caused by electrophilic quinones. Its function is as follows. Also exhibits azoreductase activity. Catalyzes the reductive cleavage of the azo bond in aromatic azo compounds to the corresponding amines. The polypeptide is FMN-dependent NADH:quinone oxidoreductase (Streptomyces avermitilis (strain ATCC 31267 / DSM 46492 / JCM 5070 / NBRC 14893 / NCIMB 12804 / NRRL 8165 / MA-4680)).